The sequence spans 253 residues: Flagellar brake protein YcgR (253 aa).

Positions 120 to 239 (QRRDFYRFAT…NEGLINRYVY (120 aa)) constitute a PilZ domain.

It belongs to the YcgR family. Monomer. Interacts with the flagellar basal bodies.

Its subcellular location is the bacterial flagellum basal body. Acts as a flagellar brake, regulating swimming and swarming in a bis-(3'-5') cyclic diguanylic acid (c-di-GMP)-dependent manner. Binds 1 c-di-GMP dimer per subunit. Increasing levels of c-di-GMP lead to decreased motility. The chain is Flagellar brake protein YcgR from Methylotenera mobilis (strain JLW8 / ATCC BAA-1282 / DSM 17540).